Here is a 305-residue protein sequence, read N- to C-terminus: Putative S-adenosyl-L-methionine-dependent methyltransferase Mvan_1344 (305 aa).

S-adenosyl-L-methionine-binding positions include Asp-130 and Asp-159–Leu-160.

The protein belongs to the UPF0677 family.

Functionally, exhibits S-adenosyl-L-methionine-dependent methyltransferase activity. The sequence is that of Putative S-adenosyl-L-methionine-dependent methyltransferase Mvan_1344 from Mycolicibacterium vanbaalenii (strain DSM 7251 / JCM 13017 / BCRC 16820 / KCTC 9966 / NRRL B-24157 / PYR-1) (Mycobacterium vanbaalenii).